Here is a 370-residue protein sequence, read N- to C-terminus: 4-hydroxy-3-methylbut-2-en-1-yl diphosphate synthase (flavodoxin) (370 aa).

[4Fe-4S] cluster contacts are provided by Cys268, Cys271, Cys303, and Glu310.

This sequence belongs to the IspG family. [4Fe-4S] cluster serves as cofactor.

It catalyses the reaction (2E)-4-hydroxy-3-methylbut-2-enyl diphosphate + oxidized [flavodoxin] + H2O + 2 H(+) = 2-C-methyl-D-erythritol 2,4-cyclic diphosphate + reduced [flavodoxin]. It functions in the pathway isoprenoid biosynthesis; isopentenyl diphosphate biosynthesis via DXP pathway; isopentenyl diphosphate from 1-deoxy-D-xylulose 5-phosphate: step 5/6. Functionally, converts 2C-methyl-D-erythritol 2,4-cyclodiphosphate (ME-2,4cPP) into 1-hydroxy-2-methyl-2-(E)-butenyl 4-diphosphate. The protein is 4-hydroxy-3-methylbut-2-en-1-yl diphosphate synthase (flavodoxin) of Bacillus anthracis (strain A0248).